The sequence spans 343 residues: Selenide, water dikinase (343 aa).

Selenocysteine 15 is a catalytic residue. Residue selenocysteine 15 is a non-standard amino acid, selenocysteine. Residues lysine 18 and threonine 45–aspartate 47 each bind ATP. Residue aspartate 48 participates in Mg(2+) binding. ATP is bound by residues aspartate 65, aspartate 88, and glycine 135 to threonine 137. Aspartate 88 contributes to the Mg(2+) binding site. Position 223 (aspartate 223) interacts with Mg(2+).

It belongs to the selenophosphate synthase 1 family. Class I subfamily. In terms of assembly, homodimer. Requires Mg(2+) as cofactor.

It catalyses the reaction hydrogenselenide + ATP + H2O = selenophosphate + AMP + phosphate + 2 H(+). Synthesizes selenophosphate from selenide and ATP. The chain is Selenide, water dikinase from Carboxydothermus hydrogenoformans (strain ATCC BAA-161 / DSM 6008 / Z-2901).